The sequence spans 245 residues: 1-(5-phosphoribosyl)-5-[(5-phosphoribosylamino)methylideneamino] imidazole-4-carboxamide isomerase (245 aa).

Residue aspartate 11 is the Proton acceptor of the active site. The Proton donor role is filled by aspartate 132.

It belongs to the HisA/HisF family.

It is found in the cytoplasm. The enzyme catalyses 1-(5-phospho-beta-D-ribosyl)-5-[(5-phospho-beta-D-ribosylamino)methylideneamino]imidazole-4-carboxamide = 5-[(5-phospho-1-deoxy-D-ribulos-1-ylimino)methylamino]-1-(5-phospho-beta-D-ribosyl)imidazole-4-carboxamide. Its pathway is amino-acid biosynthesis; L-histidine biosynthesis; L-histidine from 5-phospho-alpha-D-ribose 1-diphosphate: step 4/9. This is 1-(5-phosphoribosyl)-5-[(5-phosphoribosylamino)methylideneamino] imidazole-4-carboxamide isomerase from Geobacillus thermodenitrificans (strain NG80-2).